A 415-amino-acid chain; its full sequence is Probable cytosolic iron-sulfur protein assembly protein 1 (415 aa).

One copy of the WD 1 repeat lies at 9–48; that stretch reads AHDDKVWSLSSHPTLPLLATASTDKCSNIYRLSCSNASSS. The interval 45–70 is disordered; that stretch reads ASSSSSSSSPPSPPSPPSSSSPRRNF. Residues 54-63 are compositionally biased toward pro residues; sequence PPSPPSPPSS. 6 WD repeats span residues 79-131, 160-200, 207-246, 253-300, 335-374, and 380-415; these read THRR…DDNT, GHEN…EEFE, DHTQDVKHVTWHPTRNLLASSSYDDTIRVYKQEFDDDEWS, GHEG…GFNG, IHTHAIYSVAWSSSSGKIATAGSDGRIVVYKETNAGWEVE, and AHGVYEINCVIWAKLDLDQEVLISGGDDGNVNIWEV.

It belongs to the WD repeat CIA1 family. As to quaternary structure, interacts with NAR1.

The protein localises to the cytoplasm. It is found in the nucleus. Functionally, essential component of the cytosolic iron-sulfur (Fe/S) protein assembly machinery. Required for the maturation of extramitochondrial Fe/S proteins. This Lodderomyces elongisporus (strain ATCC 11503 / CBS 2605 / JCM 1781 / NBRC 1676 / NRRL YB-4239) (Yeast) protein is Probable cytosolic iron-sulfur protein assembly protein 1.